Here is a 157-residue protein sequence, read N- to C-terminus: 2-C-methyl-D-erythritol 2,4-cyclodiphosphate synthase (157 aa).

Residues aspartate 8 and histidine 10 each contribute to the a divalent metal cation site. 4-CDP-2-C-methyl-D-erythritol 2-phosphate contacts are provided by residues 8–10 (DVH) and 34–35 (HS). Histidine 42 serves as a coordination point for a divalent metal cation. 4-CDP-2-C-methyl-D-erythritol 2-phosphate-binding positions include 56–58 (DIG), 61–65 (FPDTD), 100–106 (AQAPKMA), 132–135 (TTTE), phenylalanine 139, and arginine 142.

The protein belongs to the IspF family. As to quaternary structure, homotrimer. The cofactor is a divalent metal cation.

It carries out the reaction 4-CDP-2-C-methyl-D-erythritol 2-phosphate = 2-C-methyl-D-erythritol 2,4-cyclic diphosphate + CMP. Its pathway is isoprenoid biosynthesis; isopentenyl diphosphate biosynthesis via DXP pathway; isopentenyl diphosphate from 1-deoxy-D-xylulose 5-phosphate: step 4/6. Involved in the biosynthesis of isopentenyl diphosphate (IPP) and dimethylallyl diphosphate (DMAPP), two major building blocks of isoprenoid compounds. Catalyzes the conversion of 4-diphosphocytidyl-2-C-methyl-D-erythritol 2-phosphate (CDP-ME2P) to 2-C-methyl-D-erythritol 2,4-cyclodiphosphate (ME-CPP) with a corresponding release of cytidine 5-monophosphate (CMP). The polypeptide is 2-C-methyl-D-erythritol 2,4-cyclodiphosphate synthase (Pseudomonas paraeruginosa (strain DSM 24068 / PA7) (Pseudomonas aeruginosa (strain PA7))).